The following is an 85-amino-acid chain: Cell division topological specificity factor (85 aa).

It belongs to the MinE family.

In terms of biological role, prevents the cell division inhibition by proteins MinC and MinD at internal division sites while permitting inhibition at polar sites. This ensures cell division at the proper site by restricting the formation of a division septum at the midpoint of the long axis of the cell. This chain is Cell division topological specificity factor, found in Cellvibrio japonicus (strain Ueda107) (Pseudomonas fluorescens subsp. cellulosa).